Consider the following 543-residue polypeptide: Chaperonin GroEL (543 aa).

Residues 29–32 (TLGP), 86–90 (DGTTT), G413, 476–478 (NAA), and D492 each bind ATP.

This sequence belongs to the chaperonin (HSP60) family. In terms of assembly, forms a cylinder of 14 subunits composed of two heptameric rings stacked back-to-back. Interacts with the co-chaperonin GroES.

The protein localises to the cytoplasm. The catalysed reaction is ATP + H2O + a folded polypeptide = ADP + phosphate + an unfolded polypeptide.. Functionally, together with its co-chaperonin GroES, plays an essential role in assisting protein folding. The GroEL-GroES system forms a nano-cage that allows encapsulation of the non-native substrate proteins and provides a physical environment optimized to promote and accelerate protein folding. In Streptococcus pyogenes serotype M5 (strain Manfredo), this protein is Chaperonin GroEL.